Reading from the N-terminus, the 275-residue chain is Testis-specific gene 13 protein (275 aa).

Residues 1–20 (MSQKRQTKFQNGKSKTSENS) are compositionally biased toward polar residues. Positions 1–28 (MSQKRQTKFQNGKSKTSENSSAKREKGM) are disordered.

Testis-specific.

This Homo sapiens (Human) protein is Testis-specific gene 13 protein (TSGA13).